We begin with the raw amino-acid sequence, 235 residues long: Phosphatidylserine decarboxylase proenzyme (235 aa).

Catalysis depends on S204, which acts as the Schiff-base intermediate with substrate; via pyruvic acid. The residue at position 204 (S204) is a Pyruvic acid (Ser); by autocatalysis.

It belongs to the phosphatidylserine decarboxylase family. PSD-A subfamily. As to quaternary structure, heterodimer of a large membrane-associated beta subunit and a small pyruvoyl-containing alpha subunit. The cofactor is pyruvate. Is synthesized initially as an inactive proenzyme. Formation of the active enzyme involves a self-maturation process in which the active site pyruvoyl group is generated from an internal serine residue via an autocatalytic post-translational modification. Two non-identical subunits are generated from the proenzyme in this reaction, and the pyruvate is formed at the N-terminus of the alpha chain, which is derived from the carboxyl end of the proenzyme. The post-translation cleavage follows an unusual pathway, termed non-hydrolytic serinolysis, in which the side chain hydroxyl group of the serine supplies its oxygen atom to form the C-terminus of the beta chain, while the remainder of the serine residue undergoes an oxidative deamination to produce ammonia and the pyruvoyl prosthetic group on the alpha chain.

It localises to the cell membrane. It carries out the reaction a 1,2-diacyl-sn-glycero-3-phospho-L-serine + H(+) = a 1,2-diacyl-sn-glycero-3-phosphoethanolamine + CO2. The protein operates within phospholipid metabolism; phosphatidylethanolamine biosynthesis; phosphatidylethanolamine from CDP-diacylglycerol: step 2/2. Functionally, catalyzes the formation of phosphatidylethanolamine (PtdEtn) from phosphatidylserine (PtdSer). This is Phosphatidylserine decarboxylase proenzyme from Mycobacterium sp. (strain JLS).